The sequence spans 78 residues: Large ribosomal subunit protein bL28 (78 aa).

Belongs to the bacterial ribosomal protein bL28 family.

The polypeptide is Large ribosomal subunit protein bL28 (Pseudoalteromonas atlantica (strain T6c / ATCC BAA-1087)).